The following is a 247-amino-acid chain: Homeobox-leucine zipper protein HOX17 (247 aa).

The interval 58–81 (ERAGLRGGGGSDEEDGGCGIDGSR) is disordered. Positions 79 to 138 (GSRKKLRLSKDQSAVLEDSFREHPTLNPRQKATLAQQLGLRPRQVEVWFQNRRARTKLKQ) form a DNA-binding region, homeobox. The tract at residues 137–182 (KQTEVDCEFLKRCCETLTEENRRLQKEVQELRALKLVSPHLYMNMS) is leucine-zipper.

Belongs to the HD-ZIP homeobox family. Class II subfamily. Expressed in seedlings, roots, stems, leaf sheaths and blades and panicles.

It localises to the nucleus. In terms of biological role, probable transcription factor. The sequence is that of Homeobox-leucine zipper protein HOX17 (HOX17) from Oryza sativa subsp. indica (Rice).